An 898-amino-acid chain; its full sequence is Cip1-interacting zinc finger protein (898 aa).

Disordered regions lie at residues 48–69 (QAPL…QPLL), 157–305 (QSLL…ALEA), and 318–471 (VQAQ…QPQV). A compositionally biased stretch (polar residues) spans 170–203 (NPSQFNLSGRNPQKQARTSSSTTPNRKDSSSQTM). Position 209 is a phosphoserine (Ser-209). A Phosphothreonine modification is found at Thr-244. The span at 263-273 (RSSEEPTEKEP) shows a compositional bias: basic and acidic residues. Lys-280 participates in a covalent cross-link: Glycyl lysine isopeptide (Lys-Gly) (interchain with G-Cter in SUMO2). Over residues 318–327 (VQAQVQSQTQ) the composition is skewed to low complexity. Positions 328-351 (PRIPSTDTQVQPKLQKQAQTQTSP) are enriched in polar residues. A Glycyl lysine isopeptide (Lys-Gly) (interchain with G-Cter in SUMO2) cross-link involves residue Lys-340. Ser-350 bears the Phosphoserine mark. Low complexity predominate over residues 355 to 383 (VLQQKQVQPQLQQEAEPQKQVQPQVQPQA). Positions 384 to 395 (HSQGPRQVQLQQ) are enriched in polar residues. Lys-401 is covalently cross-linked (Glycyl lysine isopeptide (Lys-Gly) (interchain with G-Cter in SUMO2)). The span at 402–435 (QVQPQVQPQAHSQPPRQVQLQLQKQVQTQTYPQV) shows a compositional bias: low complexity. Residues 436–445 (HTQAQPSVQP) show a composition bias toward polar residues. Ser-547 carries the post-translational modification Phosphoserine. A Glycyl lysine isopeptide (Lys-Gly) (interchain with G-Cter in SUMO2) cross-link involves residue Lys-549. The tract at residues 562-584 (STVPLTPVPRPSDSVSSTPAATS) is disordered. The residue at position 567 (Thr-567) is a Phosphothreonine. Over residues 572–584 (PSDSVSSTPAATS) the composition is skewed to low complexity. Residues Lys-588, Lys-680, and Lys-705 each participate in a glycyl lysine isopeptide (Lys-Gly) (interchain with G-Cter in SUMO2) cross-link. The Matrin-type zinc-finger motif lies at 799-830 (YICRICHKFYHSNSGAQLSHCKSLGHFENLQK). Position 821 is a phosphoserine (Ser-821). Lys-830 is covalently cross-linked (Glycyl lysine isopeptide (Lys-Gly) (interchain with G-Cter in SUMO2)). Phosphoserine is present on Ser-838. The segment covering 859-879 (LFTSSGRPPSQPNTQDKTPSK) has biased composition (polar residues). The segment at 859-898 (LFTSSGRPPSQPNTQDKTPSKVTARPSQPPLPRRSTRLKT) is disordered. Residue Lys-879 forms a Glycyl lysine isopeptide (Lys-Gly) (interchain with G-Cter in SUMO2) linkage.

As to quaternary structure, interacts with CIP/WAF1.

Its subcellular location is the nucleus. May regulate the subcellular localization of CIP/WAF1. The polypeptide is Cip1-interacting zinc finger protein (CIZ1) (Homo sapiens (Human)).